Consider the following 75-residue polypeptide: UPF0291 protein LMOf2365_1322 (75 aa).

A disordered region spans residues 56–75 (DPNGTDVTPHKVKQLRKNKH). A compositionally biased stretch (basic residues) spans 65–75 (HKVKQLRKNKH).

This sequence belongs to the UPF0291 family.

It is found in the cytoplasm. The protein is UPF0291 protein LMOf2365_1322 of Listeria monocytogenes serotype 4b (strain F2365).